The following is a 292-amino-acid chain: Acetylglutamate kinase (292 aa).

Residues 60-61 (GG), arginine 82, and asparagine 187 contribute to the substrate site.

The protein belongs to the acetylglutamate kinase family. ArgB subfamily.

The protein localises to the cytoplasm. The enzyme catalyses N-acetyl-L-glutamate + ATP = N-acetyl-L-glutamyl 5-phosphate + ADP. The protein operates within amino-acid biosynthesis; L-arginine biosynthesis; N(2)-acetyl-L-ornithine from L-glutamate: step 2/4. Catalyzes the ATP-dependent phosphorylation of N-acetyl-L-glutamate. The protein is Acetylglutamate kinase of Methanobrevibacter smithii (strain ATCC 35061 / DSM 861 / OCM 144 / PS).